The chain runs to 1076 residues: Nickel-cobalt-cadmium resistance protein NccA (1076 aa).

The next 12 membrane-spanning stretches (helical) occupy residues 14–34 (WLVL…LNLL), 367–387 (VAKN…ALLG), 391–411 (AAVI…IGMN), 419–439 (LMSL…IIVE), 476–496 (TVYG…FQGV), 503–523 (PMVI…LTFV), 562–582 (MPFL…FTFV), 904–924 (LAII…MAIG), 929–949 (TATV…ALVL), 960–980 (VGFI…ISAI), 1004–1024 (PVLM…IATG), and 1036–1056 (VVIG…PAVC).

This sequence belongs to the resistance-nodulation-cell division (RND) (TC 2.A.6) family.

It localises to the cell membrane. Component of the NCC cation-efflux system that confers resistance to nickel, cobalt and cadmium. May form a membrane tunnel, which allows ion transport across the membrane. The polypeptide is Nickel-cobalt-cadmium resistance protein NccA (nccA) (Alcaligenes xylosoxydans xylosoxydans (Achromobacter xylosoxidans)).